A 469-amino-acid polypeptide reads, in one-letter code: C4b-binding protein (469 aa).

The N-terminal stretch at 1–56 (MCAKQQQTLLPTRAAHGRLHRNRDAVAWPFSTLCRVSGPTLFQMTFTAALWVAVFG) is a signal peptide. Sushi domains lie at 57–117 (KCGP…SCAK), 118–178 (KHCR…ECVI), 179–242 (VKCG…TCEK), 243–301 (IICS…TCEF), 302–357 (DCDL…QCKA), and 358–415 (LCQK…RCEQ). 12 disulfides stabilise this stretch: cysteine 58-cysteine 103, cysteine 88-cysteine 115, cysteine 120-cysteine 160, cysteine 146-cysteine 176, cysteine 181-cysteine 223, cysteine 209-cysteine 240, cysteine 245-cysteine 287, cysteine 273-cysteine 299, cysteine 303-cysteine 343, cysteine 329-cysteine 355, cysteine 359-cysteine 400, and cysteine 386-cysteine 413. Asparagine 74 carries N-linked (GlcNAc...) asparagine glycosylation. 3 N-linked (GlcNAc...) asparagine glycosylation sites follow: asparagine 227, asparagine 275, and asparagine 292. 2 N-linked (GlcNAc...) asparagine glycosylation sites follow: asparagine 366 and asparagine 381. A glycan (N-linked (GlcNAc...) asparagine) is linked at asparagine 428.

Homoheptamer; not covalently linked. Mouse lacks the beta chain of C4BP.

Its subcellular location is the secreted. Controls the classical pathway of complement activation. It binds as a cofactor to C3b/C4b inactivator (C3bINA), which then hydrolyzes the complement fragment C4b. It also accelerates the degradation of the C4bC2a complex (C3 convertase) by dissociating the complement fragment C2a. Alpha chain binds C4b. It also interacts with serum amyloid P component. The polypeptide is C4b-binding protein (C4bpa) (Mus musculus (Mouse)).